The primary structure comprises 72 residues: Threonine dehydratase operon activator protein (72 aa).

Its function is as follows. Probable trans-acting positive activator for the tdc operon. This is Threonine dehydratase operon activator protein (tdcR) from Escherichia coli (strain K12).